Reading from the N-terminus, the 200-residue chain is Recombination protein RecR (200 aa).

The C4-type zinc-finger motif lies at Cys-59–Cys-74. The Toprim domain occupies Ser-82–Pro-177.

It belongs to the RecR family.

Functionally, may play a role in DNA repair. It seems to be involved in an RecBC-independent recombinational process of DNA repair. It may act with RecF and RecO. The polypeptide is Recombination protein RecR (Nitrobacter hamburgensis (strain DSM 10229 / NCIMB 13809 / X14)).